A 491-amino-acid polypeptide reads, in one-letter code: MTKQWEVVIGLETHAQLSTHSKIFSGASTQFGAAPNTQACPVDLALPGTLPVMNRGAVERAIQFGLAIGATVAPRSIFARKNYFYPDLPKGYQISQYEIPVVQGGQVTIQVPANEKANTPAYEKVVNLTRAHLEEDAGKSLHEDFAGMTGIDLNRAGTPLLEIVTEPEMRSAAEAVAYAKTLHTLVTWLGICDGNMQEGSFRCDANVSVRPVGQAEFGTRAEIKNLNSFRFLEEAIQYEVRRQIELIEDGGTVVQETRLYDPDKRETRSMRSKEDAHDYRYFPDPDLMPLVIDAAWVERVKSEMPELPVAIQQRFVTQYGLTPYDANVLTSSKAMAAYYEAVVSKLGPANAKAAANWLMGEVSSQLNREDLDIAASPVSSAQLALLLQRIADGTISHKIAKEIFLSIWEEKATDEAATDRIIEAKGLKQISDTGALEAIIDEVLAANQKSVEEFRAGKEKAFNALIGQAMKATKGKANPAQVNELLRKKLS.

Belongs to the GatB/GatE family. GatB subfamily. In terms of assembly, heterotrimer of A, B and C subunits.

It carries out the reaction L-glutamyl-tRNA(Gln) + L-glutamine + ATP + H2O = L-glutaminyl-tRNA(Gln) + L-glutamate + ADP + phosphate + H(+). The enzyme catalyses L-aspartyl-tRNA(Asn) + L-glutamine + ATP + H2O = L-asparaginyl-tRNA(Asn) + L-glutamate + ADP + phosphate + 2 H(+). Functionally, allows the formation of correctly charged Asn-tRNA(Asn) or Gln-tRNA(Gln) through the transamidation of misacylated Asp-tRNA(Asn) or Glu-tRNA(Gln) in organisms which lack either or both of asparaginyl-tRNA or glutaminyl-tRNA synthetases. The reaction takes place in the presence of glutamine and ATP through an activated phospho-Asp-tRNA(Asn) or phospho-Glu-tRNA(Gln). The sequence is that of Aspartyl/glutamyl-tRNA(Asn/Gln) amidotransferase subunit B from Paraburkholderia xenovorans (strain LB400).